Reading from the N-terminus, the 207-residue chain is ATP phosphoribosyltransferase (207 aa).

The protein belongs to the ATP phosphoribosyltransferase family. Short subfamily. In terms of assembly, heteromultimer composed of HisG and HisZ subunits.

Its subcellular location is the cytoplasm. The catalysed reaction is 1-(5-phospho-beta-D-ribosyl)-ATP + diphosphate = 5-phospho-alpha-D-ribose 1-diphosphate + ATP. It participates in amino-acid biosynthesis; L-histidine biosynthesis; L-histidine from 5-phospho-alpha-D-ribose 1-diphosphate: step 1/9. In terms of biological role, catalyzes the condensation of ATP and 5-phosphoribose 1-diphosphate to form N'-(5'-phosphoribosyl)-ATP (PR-ATP). Has a crucial role in the pathway because the rate of histidine biosynthesis seems to be controlled primarily by regulation of HisG enzymatic activity. The polypeptide is ATP phosphoribosyltransferase (Geobacillus kaustophilus (strain HTA426)).